The chain runs to 714 residues: Polyribonucleotide nucleotidyltransferase (714 aa).

Residues D486 and D492 each contribute to the Mg(2+) site. The 60-residue stretch at 553–612 folds into the KH domain; the sequence is PRIITMKINPEKIRDVIGKGGAVIRALTEETGTTIDIEEDGTIKIGCTSAEAGEEAKKRI. One can recognise an S1 motif domain in the interval 622–690; the sequence is GQVYDGTVLK…DKGRVRLSAK (69 aa).

It belongs to the polyribonucleotide nucleotidyltransferase family. Mg(2+) serves as cofactor.

It is found in the cytoplasm. The enzyme catalyses RNA(n+1) + phosphate = RNA(n) + a ribonucleoside 5'-diphosphate. In terms of biological role, involved in mRNA degradation. Catalyzes the phosphorolysis of single-stranded polyribonucleotides processively in the 3'- to 5'-direction. The protein is Polyribonucleotide nucleotidyltransferase of Methylobacillus flagellatus (strain ATCC 51484 / DSM 6875 / VKM B-1610 / KT).